Consider the following 356-residue polypeptide: tRNA N6-adenosine threonylcarbamoyltransferase (356 aa).

Residues His-115 and His-119 each contribute to the Fe cation site. Residues 138–142 (LVSGG), Asp-171, Gly-184, and Asn-283 each bind substrate. Asp-311 is a Fe cation binding site.

The protein belongs to the KAE1 / TsaD family. Fe(2+) is required as a cofactor.

It is found in the cytoplasm. It carries out the reaction L-threonylcarbamoyladenylate + adenosine(37) in tRNA = N(6)-L-threonylcarbamoyladenosine(37) in tRNA + AMP + H(+). In terms of biological role, required for the formation of a threonylcarbamoyl group on adenosine at position 37 (t(6)A37) in tRNAs that read codons beginning with adenine. Is involved in the transfer of the threonylcarbamoyl moiety of threonylcarbamoyl-AMP (TC-AMP) to the N6 group of A37, together with TsaE and TsaB. TsaD likely plays a direct catalytic role in this reaction. The chain is tRNA N6-adenosine threonylcarbamoyltransferase from Prochlorococcus marinus (strain NATL2A).